The sequence spans 243 residues: Pleckstrin homology domain-containing family B member 1 (243 aa).

Residues 21–128 form the PH domain; the sequence is ALVRGGWLWR…WKTALLEANS (108 aa).

As to quaternary structure, homodimer. Interacts (via PH domain) with MYO1C. Interacts (via PH domain) with MYO7A. Binds transducins. As to expression, highly expressed in retina and brain. Levels are very low or not detectable in all other tissues tested.

It is found in the membrane. The protein resides in the cytoplasm. The protein is Pleckstrin homology domain-containing family B member 1 (PLEKHB1) of Homo sapiens (Human).